The sequence spans 468 residues: Adenosylhomocysteinase (468 aa).

Residues T57, D132, and E194 each contribute to the substrate site. 195–197 (TTT) is an NAD(+) binding site. Substrate is bound by residues K224 and D228. NAD(+) contacts are provided by residues N229, 258–263 (GFGDVG), E281, N316, 337–339 (IGH), and N382.

It belongs to the adenosylhomocysteinase family. NAD(+) is required as a cofactor.

Its subcellular location is the cytoplasm. The catalysed reaction is S-adenosyl-L-homocysteine + H2O = L-homocysteine + adenosine. It participates in amino-acid biosynthesis; L-homocysteine biosynthesis; L-homocysteine from S-adenosyl-L-homocysteine: step 1/1. Functionally, may play a key role in the regulation of the intracellular concentration of adenosylhomocysteine. The polypeptide is Adenosylhomocysteinase (Methylobacterium sp. (strain 4-46)).